A 577-amino-acid chain; its full sequence is Torulene dioxygenase (577 aa).

Positions 239, 291, 361, and 570 each coordinate Fe(2+).

Belongs to the carotenoid oxygenase family. Fe(2+) serves as cofactor.

The protein localises to the cytoplasm. It is found in the cytosol. The enzyme catalyses torulene + O2 = 4'-apo-beta-carotenal + 3-methyl-2-butenal. It participates in carotenoid biosynthesis. In terms of biological role, torulene dioxygenase; part of the pathway that mediates the biosynthesis of neurosporaxanthin, a carboxylic apocarotenoid acting as an essential protective pigments and leading to orange pigmentation. CarT mediates the cleavage of torulene into beta-apo-4'-carotenal, the aldehyde corresponding to the acidic neurosporaxanthin. Is also active on other monocyclic synthetic substrates such as beta-apo-8'-carotenal and beta-apo-10'-carotenal to produce beta-apo-14'-carotenal and retinal(beta-apo-15'-carotenal), respectively. Neurosporaxanthin is synthesized from geranyl-geranyl pyrophosphate (GGPP) through several enzymatic activities. Phytoene synthase activity performed by the bifunctional enzyme carAR first produces phytoene from geranyl-geranyl pyrophosphate (GGPP). The phytoene dehydrogenase carB then introduces 4 desaturations to lead to lycopene which is substrate of the carotene cyclase activity of carAR that leads to the production of gamma-carotene. CarB then performs a 5th desaturation reaction to yield torulene. Torulene is the substrate of the dioxidase carT that breaks the molecule, removing five carbon atoms to yield beta-apo-4'-carotenal, whereas the aldehyde dehydrogenase carD mediates the last step by converting beta-apo-4'-carotenal into neurosporaxanthin. The polypeptide is Torulene dioxygenase (Fusarium fujikuroi (Bakanae and foot rot disease fungus)).